Reading from the N-terminus, the 238-residue chain is Probable phosphatase phospho2 (238 aa).

The Nucleophile role is filled by Asp-8. Asp-8 and Asp-10 together coordinate Mg(2+). Residue Asp-10 is the Proton donor of the active site. Asp-19 and Asp-99 together coordinate substrate. Asp-179 serves as a coordination point for Mg(2+).

This sequence belongs to the HAD-like hydrolase superfamily. PHOSPHO family. Mg(2+) serves as cofactor.

Functionally, probable phosphatase. In Xenopus tropicalis (Western clawed frog), this protein is Probable phosphatase phospho2 (phospho2).